The following is a 428-amino-acid chain: Tol-Pal system protein TolB (428 aa).

The signal sequence occupies residues 1 to 23; the sequence is MRRLYQTVCTLALLLVGLQAAHA.

It belongs to the TolB family. The Tol-Pal system is composed of five core proteins: the inner membrane proteins TolA, TolQ and TolR, the periplasmic protein TolB and the outer membrane protein Pal. They form a network linking the inner and outer membranes and the peptidoglycan layer.

Its subcellular location is the periplasm. Functionally, part of the Tol-Pal system, which plays a role in outer membrane invagination during cell division and is important for maintaining outer membrane integrity. The protein is Tol-Pal system protein TolB of Alkalilimnicola ehrlichii (strain ATCC BAA-1101 / DSM 17681 / MLHE-1).